The following is a 344-amino-acid chain: Phosphate acyltransferase (344 aa).

The protein belongs to the PlsX family. In terms of assembly, homodimer. Probably interacts with PlsY.

The protein localises to the cytoplasm. It catalyses the reaction a fatty acyl-[ACP] + phosphate = an acyl phosphate + holo-[ACP]. It participates in lipid metabolism; phospholipid metabolism. In terms of biological role, catalyzes the reversible formation of acyl-phosphate (acyl-PO(4)) from acyl-[acyl-carrier-protein] (acyl-ACP). This enzyme utilizes acyl-ACP as fatty acyl donor, but not acyl-CoA. The sequence is that of Phosphate acyltransferase from Thermosynechococcus vestitus (strain NIES-2133 / IAM M-273 / BP-1).